Here is a 264-residue protein sequence, read N- to C-terminus: Virulence plasmid protein pGP3-D (264 aa).

The chain is Virulence plasmid protein pGP3-D from Chlamydia psittaci (Chlamydophila psittaci).